We begin with the raw amino-acid sequence, 505 residues long: tRNA-2-methylthio-N(6)-dimethylallyladenosine synthase (505 aa).

The MTTase N-terminal domain occupies Arg-10–His-126. Residues Cys-19, Cys-55, Cys-89, Cys-163, Cys-167, and Cys-170 each contribute to the [4Fe-4S] cluster site. One can recognise a Radical SAM core domain in the interval Arg-149 to Glu-385. Residues Gln-388–Val-459 enclose the TRAM domain.

Belongs to the methylthiotransferase family. MiaB subfamily. In terms of assembly, monomer. [4Fe-4S] cluster serves as cofactor.

The protein resides in the cytoplasm. It carries out the reaction N(6)-dimethylallyladenosine(37) in tRNA + (sulfur carrier)-SH + AH2 + 2 S-adenosyl-L-methionine = 2-methylsulfanyl-N(6)-dimethylallyladenosine(37) in tRNA + (sulfur carrier)-H + 5'-deoxyadenosine + L-methionine + A + S-adenosyl-L-homocysteine + 2 H(+). Functionally, catalyzes the methylthiolation of N6-(dimethylallyl)adenosine (i(6)A), leading to the formation of 2-methylthio-N6-(dimethylallyl)adenosine (ms(2)i(6)A) at position 37 in tRNAs that read codons beginning with uridine. In Rhodococcus jostii (strain RHA1), this protein is tRNA-2-methylthio-N(6)-dimethylallyladenosine synthase.